We begin with the raw amino-acid sequence, 52 residues long: Protein YabQ (52 aa).

Its function is as follows. Identified as a multicopy suppressor of the slow growth phenotype of an rsgA (yjeQ) deletion mutant. This Escherichia coli (strain K12) protein is Protein YabQ (yabQ).